The chain runs to 228 residues: Response regulator MprA (228 aa).

The Response regulatory domain maps to 2–116 (RILVVDDDRA…ELLARMRALL (115 aa)). Aspartate 46 is subject to 4-aspartylphosphate. The segment at residues 127-225 (SVAMTFSDLT…VRGVGYVLRE (99 aa)) is a DNA-binding region (ompR/PhoB-type).

Post-translationally, phosphorylated and dephosphorylated by MprB.

It is found in the cytoplasm. Functionally, member of the two-component regulatory system MprB/MprA which contributes to maintaining a balance among several systems involved in stress resistance and is required for establishment and maintenance of persistent infection in the host. Functions as a transcriptional regulator that recognizes a 19-bp nucleotide motif comprizing two loosely conserved 8-bp direct DNA-binding motif repeats separated by a 3-bp spacer region. The polypeptide is Response regulator MprA (mprA) (Mycobacterium avium (strain 104)).